The sequence spans 84 residues: Mu-conotoxin-like Cal 12.2b (84 aa).

Positions 1–19 (MKLTCVLVVLLLVLPFGDL) are cleaved as a signal peptide. Residues 20–42 (ITTSNTEDNKRGATPWQNSLKAR) constitute a propeptide that is removed on maturation. Cystine bridges form between Cys-45–Cys-57, Cys-52–Cys-65, Cys-59–Cys-70, and Cys-64–Cys-76. Trp-72 is modified (6'-bromotryptophan). A 4-hydroxyproline modification is found at Pro-77. Residue Trp-81 is modified to 6'-bromotryptophan.

It belongs to the conotoxin O1 superfamily. In terms of tissue distribution, expressed by the venom duct.

It is found in the secreted. Functionally, mu-conotoxins block voltage-gated sodium channels. This toxin reversibly blocks voltage-gated sodium channel in cephalopods, with no alteration in the voltage dependence of sodium conductance or on the kinetics of inactivation. This chain is Mu-conotoxin-like Cal 12.2b, found in Californiconus californicus (California cone).